The sequence spans 217 residues: Ribonuclease HII (217 aa).

The RNase H type-2 domain maps to 25–215; the sequence is KLIAGVDESG…VKHVISDINR (191 aa). The a divalent metal cation site is built by D31, E32, and D123.

This sequence belongs to the RNase HII family. Mn(2+) serves as cofactor. It depends on Mg(2+) as a cofactor.

The protein resides in the cytoplasm. The catalysed reaction is Endonucleolytic cleavage to 5'-phosphomonoester.. Its function is as follows. Endonuclease that specifically degrades the RNA of RNA-DNA hybrids. This is Ribonuclease HII from Blochmanniella pennsylvanica (strain BPEN).